The primary structure comprises 382 residues: Dual-specificity RNA methyltransferase RlmN (382 aa).

The active-site Proton acceptor is E96. The 241-residue stretch at 102–342 (QGKRGTLCVS…VRTTRGEDID (241 aa)) folds into the Radical SAM core domain. A disulfide bond links C109 and C345. [4Fe-4S] cluster contacts are provided by C116, C120, and C123. S-adenosyl-L-methionine contacts are provided by residues 170 to 171 (GE), S202, 224 to 226 (SLH), and N302. Catalysis depends on C345, which acts as the S-methylcysteine intermediate.

This sequence belongs to the radical SAM superfamily. RlmN family. The cofactor is [4Fe-4S] cluster.

The protein resides in the cytoplasm. It catalyses the reaction adenosine(2503) in 23S rRNA + 2 reduced [2Fe-2S]-[ferredoxin] + 2 S-adenosyl-L-methionine = 2-methyladenosine(2503) in 23S rRNA + 5'-deoxyadenosine + L-methionine + 2 oxidized [2Fe-2S]-[ferredoxin] + S-adenosyl-L-homocysteine. It carries out the reaction adenosine(37) in tRNA + 2 reduced [2Fe-2S]-[ferredoxin] + 2 S-adenosyl-L-methionine = 2-methyladenosine(37) in tRNA + 5'-deoxyadenosine + L-methionine + 2 oxidized [2Fe-2S]-[ferredoxin] + S-adenosyl-L-homocysteine. In terms of biological role, specifically methylates position 2 of adenine 2503 in 23S rRNA and position 2 of adenine 37 in tRNAs. m2A2503 modification seems to play a crucial role in the proofreading step occurring at the peptidyl transferase center and thus would serve to optimize ribosomal fidelity. This chain is Dual-specificity RNA methyltransferase RlmN, found in Pseudomonas fluorescens (strain ATCC BAA-477 / NRRL B-23932 / Pf-5).